The primary structure comprises 209 residues: ATP-dependent Clp protease proteolytic subunit (209 aa).

Ser-107 serves as the catalytic Nucleophile. His-132 is an active-site residue.

The protein belongs to the peptidase S14 family. Fourteen ClpP subunits assemble into 2 heptameric rings which stack back to back to give a disk-like structure with a central cavity, resembling the structure of eukaryotic proteasomes.

The protein resides in the cytoplasm. It carries out the reaction Hydrolysis of proteins to small peptides in the presence of ATP and magnesium. alpha-casein is the usual test substrate. In the absence of ATP, only oligopeptides shorter than five residues are hydrolyzed (such as succinyl-Leu-Tyr-|-NHMec, and Leu-Tyr-Leu-|-Tyr-Trp, in which cleavage of the -Tyr-|-Leu- and -Tyr-|-Trp bonds also occurs).. Cleaves peptides in various proteins in a process that requires ATP hydrolysis. Has a chymotrypsin-like activity. Plays a major role in the degradation of misfolded proteins. The chain is ATP-dependent Clp protease proteolytic subunit from Ruegeria pomeroyi (strain ATCC 700808 / DSM 15171 / DSS-3) (Silicibacter pomeroyi).